The sequence spans 259 residues: Tryptophan synthase alpha chain (259 aa).

Residues Glu35 and Asp46 each act as proton acceptor in the active site.

It belongs to the TrpA family. In terms of assembly, tetramer of two alpha and two beta chains.

The enzyme catalyses (1S,2R)-1-C-(indol-3-yl)glycerol 3-phosphate + L-serine = D-glyceraldehyde 3-phosphate + L-tryptophan + H2O. It functions in the pathway amino-acid biosynthesis; L-tryptophan biosynthesis; L-tryptophan from chorismate: step 5/5. Functionally, the alpha subunit is responsible for the aldol cleavage of indoleglycerol phosphate to indole and glyceraldehyde 3-phosphate. This is Tryptophan synthase alpha chain from Methanococcus vannielii (strain ATCC 35089 / DSM 1224 / JCM 13029 / OCM 148 / SB).